The chain runs to 306 residues: Ribosomal RNA small subunit methyltransferase A (306 aa).

Residues Asn37, Val39, Gly64, Glu85, Asp115, and Asn134 each coordinate S-adenosyl-L-methionine.

The protein belongs to the class I-like SAM-binding methyltransferase superfamily. rRNA adenine N(6)-methyltransferase family. RsmA subfamily.

The protein localises to the cytoplasm. It carries out the reaction adenosine(1518)/adenosine(1519) in 16S rRNA + 4 S-adenosyl-L-methionine = N(6)-dimethyladenosine(1518)/N(6)-dimethyladenosine(1519) in 16S rRNA + 4 S-adenosyl-L-homocysteine + 4 H(+). Specifically dimethylates two adjacent adenosines (A1518 and A1519) in the loop of a conserved hairpin near the 3'-end of 16S rRNA in the 30S particle. May play a critical role in biogenesis of 30S subunits. The protein is Ribosomal RNA small subunit methyltransferase A of Mycobacterium leprae (strain Br4923).